A 2201-amino-acid polypeptide reads, in one-letter code: MDVHLIELRDLVRKWVPDDLELSEQKNIMLAQTQIRATVVESLKLLSTIVEVDSCKKHSCVHNTSKTVNAILREHKIIGPTLPDVTPDGYCVIGDVLILLEVFVRTNQESFEKKFNQDFEKLMQMSADLKKCGVTLVPTIDGRSTYYVDFIPDWVVERLRWLISRLMSSLREDGQEIEELEYERLISSLSSLENQSLGLESLLAMREKGLSYKETLDKLFLEGMENKLTVDESRTRIMKMFQIFRTLLESGYLERKYQTTDREDMLKRLRDHEFIVCSKSVEYTFDCPNCSVHLYKVLNLLLNQGSRGAPHQCLGEYMKTLSICNKIKSMKILNTRRNTLLILDTIMLNKFLDLEKVFGHVVVERVMIMQSLMTVNDRLLSIDVLMEMLEKKMTRNPLWFLKVNEKLRKLCPPEVYQSIEEYVHEVDRDHWFELKLTLHQTWPAKPLIDYKGKMRCTCVEKDSNNKNQLSDLTEEKFQLLLKKLSSFCLGITNSLKTSAVAKLRVNQPDDYYGKVTCSEVFFQSLDKEHSAVLLYQKTGEKSRAYGLAFNNVVTGQYTTEASFYCDPKRFFLPIMSDVVLFRMCNEMLSWLDYLSDDVMLEVRTCLYRLVLSILCTPSKRVQVYIQGLRYFIMAFVNEFHCTGLLDKLKVTALTESERYCMKLCDDLVVKVLNSVEDENMAKAFKFVLNTSYLCHLITKETPDRLTDQIKCFEKFLEPKLDFGSVIVNPDSSCELTAGQEEQFYQGLEKLFTDKKLESSYANKPGVCKEVLNVCMSLFNSGALEVKPLLNHDPITPSFTSTALDLSSNKSVVVPKLDELGEVLTEYDYSKLVSSVVVDLVEHFKTKGKYVVSPRSLQYKIYKRLSNLVQQRAGKGNKESELTEEEFLEQVTAEQLEVINKVETKVSRTLSGIKLSSDTENAKHDDDYHLKKLWSKDIMVRIKAETSLHEVKDFNVDTLPFDLYRELVDAIYNDPAANSHYFSERIFNPCPLELLIKNLTLKAYKEEDFFECFKYILISSNFDNKVGKYDHKNRSRLGLSSAALLVKDEARISMRESNSESIAKRLDKSFFTNSSLRNLCFYSDESPTERTSVSSNVGKLKFGLSYKEQVGGNRELYVGDLNTKLTTRLVEDYAESLTSDMKYTCLNNENEFERALLDMKSVVRQSGLAVSMDHSKWGPHMSPALFSLMLRGLDFRLKDGTLIDKEAVVNILSWHIHKMVEVPFNVVEAYLKGFIKRGLGLMDRGGATRVEEFMFGYFDQGIVPSHISSVIDMGQGILHNLSDLYGLITEQFIVYALDLCYSSSFMAYTSSDDEILLSISNSFKRNDGSMDMDLAIEALEFHYFLSDRLNKFVSPKTVAGTFASEFKSRFFIWSQEVPLLTKFVAASLHNVKAKAPSQLAETIDTILDQSVANGVSIEIIGAIAPRTNALITYSGHPFNLFLCLEETDVRDWVDGSRGYRLQRSIENAFPDDVLPEIIRSACRKIFYRIQSGTLEEDYIVTTLQQSPDDCLKQMLTSCDVEKEAIDDICNYRWLNLRAHGDLRLVLRTKIMTSTRTLQKEEVPSLIKSVQSKLSKNFVRGAKKILADAINKSAFQSCISSGFVGVCKSMGSKCVRDGKGGFKYIKDILKEIKHHEKPDCHFCKELKGIYCSELLENISEFSRPLFWDYFSLVLSNACELGNWVFCKIEIPKSVYHLNNPNHFWPIKPSSHAELEEKVGMNHVLYSIRRNFPVLFDEHISPYLSDLNMLKLNWVQKIRFLDICVAIDMTSECLGIISHIIRRKREELYIVKQSELSMSHTRVSLPLERGFNIEPDEVCHNFLLQILFESMIHPVLLTTSQFKRYFWYSEVELLPKEALHDLGQFTQFIIDCKVLNSSRAMCLDDLDVGYVSSKVKRTDTYLNLSTFMTNLDWENRHEYSSFEDLILSSPSEVFLFEITFTFSHIRRSHKFRYDRSTNYILKTKLVIEKSELVNGEDGVYCVTPHSIEYYVSQSSGNHISLDGVSLLVLDPLISGRELVNMDELLQNQDVTFSAPSQILSKIKLDFKPFTKEIKNKFSYKLIGPDVDMSPLHLDKGAIKEGDRIVSQIEIQVSFKSVITAIELLDEDQRKIFVGNLFVYLTSLKSVNRALSMSESDLRLLVENYPSVIEYMLSGCDGWLNCGSFSLIKSKTLQCIMLADERGPYRIKGQNCRRLFPTEEAIEIE.

Positions 26 to 285 are endonuclease; the sequence is KNIMLAQTQI…VCSKSVEYTF (260 aa). Positions 51, 88, and 101 each coordinate Mn(2+). Lysine 114 is an active-site residue. The RdRp catalytic domain maps to 1156–1352; the sequence is LDMKSVVRQS…FLSDRLNKFV (197 aa). Aspartate 1312 provides a ligand contact to Mg(2+).

The protein belongs to the Bunyavirales RNA polymerase family. Homomultimer; the oligomeric structure is essential for the polymerase activity. Interacts with nucleoprotein N. Interacts with protein Z; this interaction inhibits viral transcription and replication, Z partially blocks the product exit tunnel for the releasing nascent RNA product. Requires Mn(2+) as cofactor. Mg(2+) is required as a cofactor.

It is found in the virion. It localises to the host cytoplasm. It catalyses the reaction RNA(n) + a ribonucleoside 5'-triphosphate = RNA(n+1) + diphosphate. Its function is as follows. RNA-dependent RNA polymerase, which is responsible for the replication and transcription of the viral RNA genome using antigenomic RNA as an intermediate. During transcription, synthesizes subgenomic RNAs and assures their capping by a cap-snatching mechanism, which involves the endonuclease activity cleaving the host capped pre-mRNAs. These short capped RNAs are then used as primers for viral transcription. The 3'-end of subgenomic mRNAs molecules are heterogeneous and not polyadenylated. The replicase function is to direct synthesis of antigenomic and genomic RNA which are encapsidated and non capped. As a consequence of the use of the same enzyme for both transcription and replication, these mechanisms need to be well coordinated. These processes may be regulated by proteins N and Z in a dose-dependent manner. Z protein inhibits the viral polymerase L und thus the viral transcription and RNA synthesis. This Oecomys bicolor (Bicolored arboreal rice rat) protein is RNA-directed RNA polymerase L.